Reading from the N-terminus, the 108-residue chain is Insulin (108 aa).

Positions 1–21 (MAVWIQAGALLFLLAVSSVNA) are cleaved as a signal peptide. Disulfide bonds link C30-C94, C42-C107, and C93-C98. A propeptide spans 54 to 85 (DVDPPLGFLPPKSAQETEVADFAFKDHAEVIR) (c peptide).

Belongs to the insulin family. In terms of assembly, heterodimer of a B chain and an A chain linked by two disulfide bonds.

The protein resides in the secreted. Insulin decreases blood glucose concentration. It increases cell permeability to monosaccharides, amino acids and fatty acids. It accelerates glycolysis, the pentose phosphate cycle, and glycogen synthesis in liver. This is Insulin (ins) from Cyprinus carpio (Common carp).